A 197-amino-acid polypeptide reads, in one-letter code: A-type ATP synthase subunit E 2 (197 aa).

It belongs to the V-ATPase E subunit family. As to quaternary structure, has multiple subunits with at least A(3), B(3), C, D, E, F, H, I and proteolipid K(x).

It is found in the cell membrane. Component of the A-type ATP synthase that produces ATP from ADP in the presence of a proton gradient across the membrane. In Methanospirillum hungatei JF-1 (strain ATCC 27890 / DSM 864 / NBRC 100397 / JF-1), this protein is A-type ATP synthase subunit E 2.